Here is a 228-residue protein sequence, read N- to C-terminus: Carboxylesterase SOBER1 (228 aa).

Active-site charge relay system residues include Ser-106, Asp-160, and His-192.

This sequence belongs to the AB hydrolase superfamily. AB hydrolase 2 family.

Possesses carboxylesterase activity in vitro with a preference for short acyl chain substrates. Functions as a negative regulator of the hypersensitive response (HR) triggered by the bacterial type III effector protein AvrBsT. Possesses phospholipase A2 (PLA2) activity and hydrolyzes phosphatidylcholine (PC), a lipid that is hydrolyzed by phospholipase D (PLD) to produce phosphatidic acid (PA). Required to suppress AvrBsT-dependent HR and PLD-dependent production of PA in response to AvrBsT elicitation. This is Carboxylesterase SOBER1 from Arabidopsis thaliana (Mouse-ear cress).